The primary structure comprises 211 residues: tRNA (guanine-N(7)-)-methyltransferase (211 aa).

Positions 44, 69, 96, and 118 each coordinate S-adenosyl-L-methionine. Residue aspartate 118 is part of the active site. Lysine 122 provides a ligand contact to substrate. Residues 124–129 (KHEKRR) form an interaction with RNA region. Residues aspartate 154 and 191–194 (TEYE) each bind substrate.

The protein belongs to the class I-like SAM-binding methyltransferase superfamily. TrmB family.

The catalysed reaction is guanosine(46) in tRNA + S-adenosyl-L-methionine = N(7)-methylguanosine(46) in tRNA + S-adenosyl-L-homocysteine. The protein operates within tRNA modification; N(7)-methylguanine-tRNA biosynthesis. Functionally, catalyzes the formation of N(7)-methylguanine at position 46 (m7G46) in tRNA. The polypeptide is tRNA (guanine-N(7)-)-methyltransferase (Streptococcus pyogenes serotype M12 (strain MGAS2096)).